The primary structure comprises 427 residues: Serine--tRNA ligase (427 aa).

Position 232–234 (232–234 (TAE)) interacts with L-serine. 263–265 (RSE) contributes to the ATP binding site. Residue Glu286 participates in L-serine binding. 350–353 (EISS) contacts ATP. Ser385 lines the L-serine pocket.

It belongs to the class-II aminoacyl-tRNA synthetase family. Type-1 seryl-tRNA synthetase subfamily. Homodimer. The tRNA molecule binds across the dimer.

The protein localises to the cytoplasm. The catalysed reaction is tRNA(Ser) + L-serine + ATP = L-seryl-tRNA(Ser) + AMP + diphosphate + H(+). The enzyme catalyses tRNA(Sec) + L-serine + ATP = L-seryl-tRNA(Sec) + AMP + diphosphate + H(+). It participates in aminoacyl-tRNA biosynthesis; selenocysteinyl-tRNA(Sec) biosynthesis; L-seryl-tRNA(Sec) from L-serine and tRNA(Sec): step 1/1. In terms of biological role, catalyzes the attachment of serine to tRNA(Ser). Is also able to aminoacylate tRNA(Sec) with serine, to form the misacylated tRNA L-seryl-tRNA(Sec), which will be further converted into selenocysteinyl-tRNA(Sec). This is Serine--tRNA ligase from Lacticaseibacillus casei (strain BL23) (Lactobacillus casei).